Reading from the N-terminus, the 232-residue chain is Small ribosomal subunit protein uS2 (232 aa).

Belongs to the universal ribosomal protein uS2 family.

The polypeptide is Small ribosomal subunit protein uS2 (Pelotomaculum thermopropionicum (strain DSM 13744 / JCM 10971 / SI)).